The sequence spans 157 residues: MRIGHGFDVHAFGGEGPLIIGGVRIPYEKGLLAHSDGDVALHALTDALLGAAALGDIGKLFPDTDEAYKGADSRELLREALRQIAQKGYRVGNVDVTIIAQAPKMLPHAPQMRINIAEDLGIHMDEVNVKATTTEKLGFTGRGEGIACEAVALLIKA.

A divalent metal cation-binding residues include Asp-8 and His-10. 4-CDP-2-C-methyl-D-erythritol 2-phosphate-binding positions include 8-10 (DVH) and 34-35 (HS). His-42 is an a divalent metal cation binding site. 4-CDP-2-C-methyl-D-erythritol 2-phosphate contacts are provided by residues 56-58 (DIG), 61-65 (FPDTD), 100-106 (AQAPKML), 132-135 (TTTE), Phe-139, and Arg-142.

It belongs to the IspF family. Homotrimer. Requires a divalent metal cation as cofactor.

It catalyses the reaction 4-CDP-2-C-methyl-D-erythritol 2-phosphate = 2-C-methyl-D-erythritol 2,4-cyclic diphosphate + CMP. The protein operates within isoprenoid biosynthesis; isopentenyl diphosphate biosynthesis via DXP pathway; isopentenyl diphosphate from 1-deoxy-D-xylulose 5-phosphate: step 4/6. Its function is as follows. Involved in the biosynthesis of isopentenyl diphosphate (IPP) and dimethylallyl diphosphate (DMAPP), two major building blocks of isoprenoid compounds. Catalyzes the conversion of 4-diphosphocytidyl-2-C-methyl-D-erythritol 2-phosphate (CDP-ME2P) to 2-C-methyl-D-erythritol 2,4-cyclodiphosphate (ME-CPP) with a corresponding release of cytidine 5-monophosphate (CMP). The chain is 2-C-methyl-D-erythritol 2,4-cyclodiphosphate synthase from Erwinia tasmaniensis (strain DSM 17950 / CFBP 7177 / CIP 109463 / NCPPB 4357 / Et1/99).